The chain runs to 328 residues: DNA-directed RNA polymerase subunit alpha (328 aa).

Positions 1–234 (MQGSVTEFLK…EQLDAFVDLR (234 aa)) are alpha N-terminal domain (alpha-NTD). The tract at residues 248–328 (FXPILLRPVD…NWPPASIAED (81 aa)) is alpha C-terminal domain (alpha-CTD).

This sequence belongs to the RNA polymerase alpha chain family. Homodimer. The RNAP catalytic core consists of 2 alpha, 1 beta, 1 beta' and 1 omega subunit. When a sigma factor is associated with the core the holoenzyme is formed, which can initiate transcription.

The catalysed reaction is RNA(n) + a ribonucleoside 5'-triphosphate = RNA(n+1) + diphosphate. DNA-dependent RNA polymerase catalyzes the transcription of DNA into RNA using the four ribonucleoside triphosphates as substrates. The polypeptide is DNA-directed RNA polymerase subunit alpha (Haemophilus influenzae (strain ATCC 51907 / DSM 11121 / KW20 / Rd)).